A 143-amino-acid polypeptide reads, in one-letter code: uncharacterized protein (143 aa).

This is an uncharacterized protein from Thermoproteus tenax virus 1 (strain KRA1) (TTV1).